The following is a 442-amino-acid chain: Probable glycine dehydrogenase (decarboxylating) subunit 1 (442 aa).

The protein belongs to the GcvP family. N-terminal subunit subfamily. As to quaternary structure, the glycine cleavage system is composed of four proteins: P, T, L and H. In this organism, the P 'protein' is a heterodimer of two subunits.

It catalyses the reaction N(6)-[(R)-lipoyl]-L-lysyl-[glycine-cleavage complex H protein] + glycine + H(+) = N(6)-[(R)-S(8)-aminomethyldihydrolipoyl]-L-lysyl-[glycine-cleavage complex H protein] + CO2. Its function is as follows. The glycine cleavage system catalyzes the degradation of glycine. The P protein binds the alpha-amino group of glycine through its pyridoxal phosphate cofactor; CO(2) is released and the remaining methylamine moiety is then transferred to the lipoamide cofactor of the H protein. In Geotalea uraniireducens (strain Rf4) (Geobacter uraniireducens), this protein is Probable glycine dehydrogenase (decarboxylating) subunit 1.